A 147-amino-acid polypeptide reads, in one-letter code: Allograft inflammatory factor 1 (147 aa).

S2 carries the post-translational modification N-acetylserine. K11 bears the N6-acetyllysine mark. S39 is modified (phosphoserine). EF-hand domains lie at 45-80 (SKLEGFKEKYMEFDLNGNGDIDIMSLKRMLEKLGVP) and 81-115 (KTHLELKKLIGEVSSGSGETFSYPDFLRMMLGKRS). Ca(2+)-binding residues include D58, N60, N62, D64, T100, and D105. The segment at 128-147 (AREKEKPTGPPAKKAISELP) is disordered.

As to quaternary structure, homodimer (Potential). Monomer. Interacts with LCP1. In terms of processing, phosphorylated on serine residues.

Its subcellular location is the cytoplasm. The protein resides in the cytoskeleton. The protein localises to the cell projection. It is found in the ruffle membrane. It localises to the phagocytic cup. Functionally, actin-binding protein that enhances membrane ruffling and RAC activation. Enhances the actin-bundling activity of LCP1. Binds calcium. Plays a role in RAC signaling and in phagocytosis. May play a role in macrophage activation and function. Promotes the proliferation of vascular smooth muscle cells and of T-lymphocytes. Enhances lymphocyte migration. Plays a role in vascular inflammation. This Macaca mulatta (Rhesus macaque) protein is Allograft inflammatory factor 1 (AIF1).